The following is a 454-amino-acid chain: MSPLHVVILAAGQGSRMKSSLPKVLHPVAGKAMLHHVVDTAKQLGAEKIHTVIGHGADQVRASLEDDSVNWVLQTEQLGTGHAVAQALPALPDDARVLVLYGDVPLTRKDTLETMVADLDERNLALLTVDMDNPHGYGRIVRNEQGLVQAIVEQKDATAEQQQIQEVNTGILAVSASHLKQWLPALSNSNAQGEYYLTDIIAMAVDHGLSVTVSQPLNPFEVQGVNNRLQLAELERWYQRQQAERLMTEGASLADPARIEVRGELTIGNDLWIDVNAVFEGRVSLGNNVVIGPNCVIKDATIADGAEIKANSVIEGAVVGANAQIGPFARLRPGTELAANTKIGNFVETKKAVVGEGSKINHLSYVGDASLGRNVNVGAGTITCNYDGVNKHQTVLGDGVFVGSNTSLVAPVNVAEQATIGAGSTITRDISKGELAVARGKQRNIAGWERPKKA.

A pyrophosphorylase region spans residues 1–228 (MSPLHVVILA…PFEVQGVNNR (228 aa)). Residues 9–12 (LAAG), lysine 23, glutamine 74, 79–80 (GT), 101–103 (YGD), glycine 138, glutamate 153, asparagine 168, and asparagine 226 contribute to the UDP-N-acetyl-alpha-D-glucosamine site. Aspartate 103 serves as a coordination point for Mg(2+). Residue asparagine 226 participates in Mg(2+) binding. Residues 229 to 249 (LQLAELERWYQRQQAERLMTE) are linker. The segment at 250–454 (GASLADPARI…IAGWERPKKA (205 aa)) is N-acetyltransferase. UDP-N-acetyl-alpha-D-glucosamine is bound by residues arginine 332 and lysine 350. Histidine 362 acts as the Proton acceptor in catalysis. UDP-N-acetyl-alpha-D-glucosamine-binding residues include tyrosine 365 and asparagine 376. Residues alanine 379, 385-386 (NY), serine 404, alanine 422, and arginine 439 contribute to the acetyl-CoA site.

It in the N-terminal section; belongs to the N-acetylglucosamine-1-phosphate uridyltransferase family. This sequence in the C-terminal section; belongs to the transferase hexapeptide repeat family. As to quaternary structure, homotrimer. Mg(2+) is required as a cofactor.

The protein localises to the cytoplasm. The catalysed reaction is alpha-D-glucosamine 1-phosphate + acetyl-CoA = N-acetyl-alpha-D-glucosamine 1-phosphate + CoA + H(+). The enzyme catalyses N-acetyl-alpha-D-glucosamine 1-phosphate + UTP + H(+) = UDP-N-acetyl-alpha-D-glucosamine + diphosphate. The protein operates within nucleotide-sugar biosynthesis; UDP-N-acetyl-alpha-D-glucosamine biosynthesis; N-acetyl-alpha-D-glucosamine 1-phosphate from alpha-D-glucosamine 6-phosphate (route II): step 2/2. It functions in the pathway nucleotide-sugar biosynthesis; UDP-N-acetyl-alpha-D-glucosamine biosynthesis; UDP-N-acetyl-alpha-D-glucosamine from N-acetyl-alpha-D-glucosamine 1-phosphate: step 1/1. It participates in bacterial outer membrane biogenesis; LPS lipid A biosynthesis. Its function is as follows. Catalyzes the last two sequential reactions in the de novo biosynthetic pathway for UDP-N-acetylglucosamine (UDP-GlcNAc). The C-terminal domain catalyzes the transfer of acetyl group from acetyl coenzyme A to glucosamine-1-phosphate (GlcN-1-P) to produce N-acetylglucosamine-1-phosphate (GlcNAc-1-P), which is converted into UDP-GlcNAc by the transfer of uridine 5-monophosphate (from uridine 5-triphosphate), a reaction catalyzed by the N-terminal domain. The sequence is that of Bifunctional protein GlmU from Marinobacter nauticus (strain ATCC 700491 / DSM 11845 / VT8) (Marinobacter aquaeolei).